Here is a 180-residue protein sequence, read N- to C-terminus: Beta-lactoglobulin (180 aa).

A signal peptide spans 1–18 (MKCLLLALGLALACGIQA). Disulfide bonds link cysteine 84–cysteine 178, cysteine 124–cysteine 137, and cysteine 124–cysteine 139.

Belongs to the calycin superfamily. Lipocalin family. In terms of assembly, under physiological conditions beta-lactoglobulin exists as an equilibrium mixture of monomeric and dimeric forms. Interaction with LMBR1L is controversial. Post-translationally, alternate disulfide bonds occur in equal amounts. Synthesized in mammary gland and secreted in milk.

Its subcellular location is the secreted. Functionally, primary component of whey, it binds retinol and is probably involved in the transport of that molecule. The polypeptide is Beta-lactoglobulin (LGB) (Capra hircus (Goat)).